Here is a 295-residue protein sequence, read N- to C-terminus: ER-localized J domain-containing protein 5 (295 aa).

The first 20 residues, 1 to 20 (MNGYWKPALVVLGLVSLSYA), serve as a signal peptide directing secretion. At 21–130 (FTTIETEIFQ…GFYFSRMKPK (110 aa)) the chain is on the lumenal side. A J domain is found at 42 to 110 (DMNFYKFLKL…RKIYDYYLQN (69 aa)). The chain crosses the membrane as a helical span at residues 131 to 151 (TWFLLAFIWIVVNIGQYIISI). The Cytoplasmic segment spans residues 152–295 (IQYRSQRSRI…PNGKVIYSRK (144 aa)). The disordered stretch occupies residues 259-287 (KYDGNQTKKGNKVKKGSAKKGQKKMELPN). A compositionally biased stretch (basic residues) spans 267 to 280 (KGNKVKKGSAKKGQ).

It belongs to the DnaJ family.

It localises to the endoplasmic reticulum membrane. Functionally, dnaJ-like chaperone required for the folding capacity of the endoplasmic reticulum. This Saccharomyces cerevisiae (strain ATCC 204508 / S288c) (Baker's yeast) protein is ER-localized J domain-containing protein 5 (ERJ5).